We begin with the raw amino-acid sequence, 338 residues long: (-)-alpha-amorphene synthase ((2E,6E)-farnesyl diphosphate cyclizing) (338 aa).

Mg(2+) contacts are provided by Asp105 and Glu109. The DDXXE motif motif lies at Asp105 to Glu109. Arg196 lines the substrate pocket. Mg(2+) is bound at residue Ser246. Substrate is bound at residue Lys249. A Mg(2+)-binding site is contributed by Glu250. Substrate is bound at residue Arg327 to Tyr328.

Belongs to the terpene synthase family. Mg(2+) is required as a cofactor.

It carries out the reaction (2E,6E)-farnesyl diphosphate = (-)-alpha-amorphene + diphosphate. The protein operates within secondary metabolite biosynthesis; terpenoid biosynthesis. In terms of biological role, catalyzes the conversion of (2E,6E)-farnesyl diphosphate (FPP) to yield the bicyclic sesquiterpene (1R,6S,7S)-(-)-alpha-amorphene via a probable 1,6-cyclization, which could involve the abstraction of the pyrophosphate from FPP to yield a (R)-bisabolyl cation. The only accepted substrate is (2E,6E)-farnesyl diphosphate (FPP). The sequence is that of (-)-alpha-amorphene synthase ((2E,6E)-farnesyl diphosphate cyclizing) from Streptomyces viridochromogenes (strain DSM 40736 / JCM 4977 / BCRC 1201 / Tue 494).